A 225-amino-acid chain; its full sequence is C-reactive protein (225 aa).

The N-terminal stretch at 1–19 (MAKLLLYFLLLTSLSDVFG) is a signal peptide. In terms of domain architecture, Pentraxin (PTX) spans 24 to 225 (SKKTFVFPKE…EVFIKPQLWP (202 aa)). A disulfide bond links Cys-55 and Cys-116. Positions 80, 158, 159, and 169 each coordinate Ca(2+).

The protein belongs to the pentraxin family. Homopentamer. Pentraxin (or pentaxin) have a discoid arrangement of 5 non-covalently bound subunits. Interacts with FCN1; may regulate monocyte activation by FCN1. Requires Ca(2+) as cofactor. As to expression, found in plasma.

It is found in the secreted. Displays several functions associated with host defense: it promotes agglutination, bacterial capsular swelling, phagocytosis and complement fixation through its calcium-dependent binding to phosphorylcholine. Can interact with DNA and histones and may scavenge nuclear material released from damaged circulating cells. This Cavia porcellus (Guinea pig) protein is C-reactive protein (CRP).